A 156-amino-acid polypeptide reads, in one-letter code: Small ribosomal subunit protein uS7 (156 aa).

Belongs to the universal ribosomal protein uS7 family. As to quaternary structure, part of the 30S ribosomal subunit. Contacts proteins S9 and S11.

In terms of biological role, one of the primary rRNA binding proteins, it binds directly to 16S rRNA where it nucleates assembly of the head domain of the 30S subunit. Is located at the subunit interface close to the decoding center, probably blocks exit of the E-site tRNA. This is Small ribosomal subunit protein uS7 from Methylobacterium radiotolerans (strain ATCC 27329 / DSM 1819 / JCM 2831 / NBRC 15690 / NCIMB 10815 / 0-1).